A 97-amino-acid chain; its full sequence is MKIRPLHDRVIIKRIEAEAKSAGGIVLTGTAAQKSTRGEVLAVGTGRILDNGDVKALAVKVGDKVIFNEGYGVKTEKLDGQDVLILSETDILAIVEE.

Belongs to the GroES chaperonin family. As to quaternary structure, heptamer of 7 subunits arranged in a ring. Interacts with the chaperonin GroEL.

It is found in the cytoplasm. In terms of biological role, together with the chaperonin GroEL, plays an essential role in assisting protein folding. The GroEL-GroES system forms a nano-cage that allows encapsulation of the non-native substrate proteins and provides a physical environment optimized to promote and accelerate protein folding. GroES binds to the apical surface of the GroEL ring, thereby capping the opening of the GroEL channel. The polypeptide is Co-chaperonin GroES (Aeromonas hydrophila subsp. hydrophila (strain ATCC 7966 / DSM 30187 / BCRC 13018 / CCUG 14551 / JCM 1027 / KCTC 2358 / NCIMB 9240 / NCTC 8049)).